A 146-amino-acid polypeptide reads, in one-letter code: Hemoglobin subunit beta (146 aa).

Residues 2-146 form the Globin domain; the sequence is QWAAEEKQLI…VAHALARKYH (145 aa). Residues histidine 63 and histidine 92 each coordinate heme b.

Belongs to the globin family. As to quaternary structure, heterotetramer of two alpha chains and two beta chains. As to expression, red blood cells.

Its function is as follows. Involved in oxygen transport from the lung to the various peripheral tissues. In Accipiter gentilis (Northern goshawk), this protein is Hemoglobin subunit beta (HBB).